Consider the following 435-residue polypeptide: Transmembrane protease serine 4 (435 aa).

Residues 1 to 30 (MESDSGQPLNNRDIVPFRKPRRPQETFKKV) are Cytoplasmic-facing. The helical; Signal-anchor for type II membrane protein transmembrane segment at 31–51 (GIPIIAVLLSLIALVIVALLI) threads the bilayer. Over 52-435 (KVILDKYYFI…WIYNVRKSEM (384 aa)) the chain is Extracellular. One can recognise an LDL-receptor class A domain in the interval 59–101 (YFICGSPLTFIQRGQLCDGHLDCASGEDEEHCVKDFPEKPGVA). Intrachain disulfides connect Cys-62–Cys-81, Cys-75–Cys-90, Cys-125–Cys-181, Cys-138–Cys-191, Cys-194–Cys-308, Cys-228–Cys-244, Cys-354–Cys-370, and Cys-381–Cys-408. One can recognise an SRCR domain in the interval 102–202 (VRLSKDRSTL…DCGKSLKTPR (101 aa)). N-linked (GlcNAc...) asparagine glycans are attached at residues Asn-128 and Asn-176. The region spanning 203–432 (VVGGVEAPVD…YLNWIYNVRK (230 aa)) is the Peptidase S1 domain. Catalysis depends on charge relay system residues His-243 and Asp-288. Residue Ser-385 is the Charge relay system of the active site.

This sequence belongs to the peptidase S1 family. Post-translationally, proteolytically processed; probably by an autocatalytic mechanism.

It is found in the cell membrane. The protein resides in the secreted. Plasma membrane-anchored serine protease that directly induces processing of pro-uPA/PLAU into the active form through proteolytic activity. Seems to be capable of activating ENaC. This is Transmembrane protease serine 4 from Mus musculus (Mouse).